The following is a 309-amino-acid chain: Syndecan-1 (309 aa).

The first 22 residues, 1–22, serve as a signal peptide directing secretion; sequence MRRAALWLWLCALALRLQPVLP. Over 24–253 the chain is Extracellular; that stretch reads IMAVNVPPED…GLLDRKEVLG (230 aa). Disordered regions lie at residues 28–57 and 142–185; these read NVPP…DITL and ARAT…GGTS. The segment covering 32-42 has biased composition (acidic residues); it reads EDQDGSGDDSD. S37 is a glycosylation site (O-linked (Xyl...) (chondroitin sulfate) serine). N43 is a glycosylation site (N-linked (GlcNAc...) asparagine). O-linked (Xyl...) (heparan sulfate) serine glycans are attached at residues S45 and S47. The span at 142-151 shows a compositional bias: polar residues; sequence ARATTAQAPV. O-linked (Xyl...) (chondroitin sulfate) serine glycosylation is found at S205 and S215. A helical membrane pass occupies residues 254-274; the sequence is GVIAGGLVGLIFAVCLVGFML. The Cytoplasmic portion of the chain corresponds to 275–309; the sequence is YRMKKKDEGSYSLEEPKQANGGAYQKPTKQEEFYA. The tract at residues 283–309 is disordered; it reads GSYSLEEPKQANGGAYQKPTKQEEFYA. The residue at position 284 (S284) is a Phosphoserine.

The protein belongs to the syndecan proteoglycan family. Interacts with CDCP1. Interacts (via C-terminus) with TIAM1 (via PDZ domain). Interacts with MDK. Shedding is enhanced by a number of factors such as heparanase, thrombin or EGF. Also by stress and wound healing. PMA-mediated shedding is inhibited by TIMP3.

The protein localises to the membrane. The protein resides in the secreted. It is found in the extracellular exosome. Cell surface proteoglycan that contains both heparan sulfate and chondroitin sulfate and that links the cytoskeleton to the interstitial matrix. Regulates exosome biogenesis in concert with SDCBP and PDCD6IP. Able to induce its own expression in dental mesenchymal cells and also in the neighboring dental epithelial cells via an MSX1-mediated pathway. The polypeptide is Syndecan-1 (Cricetulus griseus (Chinese hamster)).